We begin with the raw amino-acid sequence, 427 residues long: Trigger factor (427 aa).

The region spanning 163–248 (GDTVVIDFVG…IHEVKAKEVP (86 aa)) is the PPIase FKBP-type domain.

The protein belongs to the FKBP-type PPIase family. Tig subfamily.

Its subcellular location is the cytoplasm. It carries out the reaction [protein]-peptidylproline (omega=180) = [protein]-peptidylproline (omega=0). In terms of biological role, involved in protein export. Acts as a chaperone by maintaining the newly synthesized protein in an open conformation. Functions as a peptidyl-prolyl cis-trans isomerase. The protein is Trigger factor of Streptococcus pneumoniae (strain Taiwan19F-14).